A 341-amino-acid chain; its full sequence is tRNA N6-adenosine threonylcarbamoyltransferase (341 aa).

Fe cation is bound by residues His-111 and His-115. Residues 134–138 (LVSGG), Asp-167, Gly-180, and Asn-272 contribute to the substrate site. A Fe cation-binding site is contributed by Asp-300.

It belongs to the KAE1 / TsaD family. The cofactor is Fe(2+).

The protein resides in the cytoplasm. It carries out the reaction L-threonylcarbamoyladenylate + adenosine(37) in tRNA = N(6)-L-threonylcarbamoyladenosine(37) in tRNA + AMP + H(+). Functionally, required for the formation of a threonylcarbamoyl group on adenosine at position 37 (t(6)A37) in tRNAs that read codons beginning with adenine. Is involved in the transfer of the threonylcarbamoyl moiety of threonylcarbamoyl-AMP (TC-AMP) to the N6 group of A37, together with TsaE and TsaB. TsaD likely plays a direct catalytic role in this reaction. The polypeptide is tRNA N6-adenosine threonylcarbamoyltransferase (Edwardsiella ictaluri (strain 93-146)).